Consider the following 812-residue polypeptide: Eukaryotic translation initiation factor 3 subunit C (812 aa).

Residues 1–110 are disordered; it reads MSRFFSSNYE…EESDEEDGKK (110 aa). Composition is skewed to acidic residues over residues 18-30 and 38-64; these read SEEDLLSSSEEDL and SELDQESDDSFFNESESESEADVDSDD. S98, S99, and S103 each carry phosphoserine. Positions 608–783 constitute a PCI domain; it reads YHQHINLDLI…TIFVVEKGDE (176 aa).

This sequence belongs to the eIF-3 subunit C family. The eukaryotic translation initiation factor 3 (eIF-3) core complex is composed of TIF32, PRT1, NIP1, TIF34 and TIF35. A subcomplex of TIF32, NIP1 and PRT1 mediates the interaction with eIF-1, TIF5/eIF-5 and HCR1. The factors eIF-1, eIF-2, eIF-3, TIF5/eIF-5 and methionyl-tRNAi form a multifactor complex (MFC) that may bind to the 40S ribosome. TIF32, NIP1 and TIF5/eIF-5 comprise a minimal 40S-ribosome-binding unit. NIP1 interacts with TIF5/eIF-5 and SUI1.

It is found in the cytoplasm. Its function is as follows. Component of the eukaryotic translation initiation factor 3 (eIF-3) complex, which is involved in protein synthesis of a specialized repertoire of mRNAs and, together with other initiation factors, stimulates binding of mRNA and methionyl-tRNAi to the 40S ribosome. The eIF-3 complex specifically targets and initiates translation of a subset of mRNAs involved in cell proliferation. In Saccharomyces cerevisiae (strain ATCC 204508 / S288c) (Baker's yeast), this protein is Eukaryotic translation initiation factor 3 subunit C.